Here is a 430-residue protein sequence, read N- to C-terminus: Ribosomal protein uS12 methylthiotransferase RimO (430 aa).

The MTTase N-terminal domain maps to 1-116 (MKIGIKVLGC…IAEAIEKATP (116 aa)). Residues Cys10, Cys46, Cys79, Cys146, Cys150, and Cys153 each coordinate [4Fe-4S] cluster. A Radical SAM core domain is found at 132-362 (SCNNSFAYVK…LIFQSQIAYE (231 aa)). Positions 365–430 (KRFVGKNLNV…DEYDLKGELI (66 aa)) constitute a TRAM domain.

This sequence belongs to the methylthiotransferase family. RimO subfamily. It depends on [4Fe-4S] cluster as a cofactor.

The protein resides in the cytoplasm. It carries out the reaction L-aspartate(89)-[ribosomal protein uS12]-hydrogen + (sulfur carrier)-SH + AH2 + 2 S-adenosyl-L-methionine = 3-methylsulfanyl-L-aspartate(89)-[ribosomal protein uS12]-hydrogen + (sulfur carrier)-H + 5'-deoxyadenosine + L-methionine + A + S-adenosyl-L-homocysteine + 2 H(+). Its function is as follows. Catalyzes the methylthiolation of an aspartic acid residue of ribosomal protein uS12. The sequence is that of Ribosomal protein uS12 methylthiotransferase RimO from Pseudothermotoga lettingae (strain ATCC BAA-301 / DSM 14385 / NBRC 107922 / TMO) (Thermotoga lettingae).